The following is a 297-amino-acid chain: MAGPVRGAAGPWALDLLRALPRVSLANLRPNPGSRKPERRRRGQRRGRKCGRGHKGERQRGTRPRLGFEGGQTPFYLRIPKYGFNEGHSFRRQYQPLSLNRLQYLIDLGRVDPTQPIDLTQLVNGRGVTIQPSKRDYGVQLVEEGADTFKAKVNIEVQLASELAIAAIEKNGGVVTTAFYDPRSLEILCKPIPFFLRGQPIPKRMLPPEALVPYYTDARNRGYLADPARFPEARLELAKKYGYILPDITKDELFKMLSSRKDPRQIFFGLAPGWVVNMADKKILKPTDEKLLEYYSS.

Residues 1-22 (MAGPVRGAAGPWALDLLRALPR) constitute a mitochondrion transit peptide. Residues 27–68 (NLRPNPGSRKPERRRRGQRRGRKCGRGHKGERQRGTRPRLGF) form a disordered region. Basic residues predominate over residues 37 to 53 (PERRRRGQRRGRKCGRG).

Belongs to the universal ribosomal protein uL15 family. As to quaternary structure, component of the mitochondrial ribosome large subunit (39S) which comprises a 16S rRNA and about 50 distinct proteins.

Its subcellular location is the mitochondrion. This chain is Large ribosomal subunit protein uL15m (MRPL15), found in Bos taurus (Bovine).